The sequence spans 260 residues: UPF0246 protein BURPS668_1321 (260 aa).

Belongs to the UPF0246 family.

The protein is UPF0246 protein BURPS668_1321 of Burkholderia pseudomallei (strain 668).